Consider the following 518-residue polypeptide: MARRLLTLLGLLAAAVASPVLWQKDCAKGPEVWCQSLRTASQCGAVKHCQQNVWSKPAVNSIPCDLCKELVTVVGKVLKDNGTEDEIRSYLEKRCEFLPDQGLASECKEIVDSYLPVIMDMIKEEFDKPEVVCSALSLCQSLQKHLAAMKLQKQLQSNKIPELDFSELTSPFMANVPLLLYPQDKPKQKSKATEDVCQDCIRLVTDVQEAVRTNATFVKSLVAHAKEECDRLGPGMSDMCKSYISEYSDLAIQMMMHMKDQQPKDICAMVGFCPSVKSVPLQTLVPAQVVHEVKMETVEKATVQEKTFSVCEICETMVKEVTGLLESNKTEEEIVHEMEVVCYLLPASVKDQCKDFIEVYGQALIDMLLEATNPEAVCVMLKCCAANKPPQQPVVVKPAGGFCDICKMIVAYADKELEKNATTTEIEALLEKVCHFLPESVSDQCVQFVEQYEPVVVQLLAEMMDPTFVCTKLGVCGAAKKPLLGEDACVWGPGYWCKNMETAAQCNAVDHCRRHVWN.

The N-terminal stretch at 1 to 17 (MARRLLTLLGLLAAAVA) is a signal peptide. A propeptide spanning residues 18-60 (SPVLWQKDCAKGPEVWCQSLRTASQCGAVKHCQQNVWSKPAVN) is cleaved from the precursor. One can recognise a Saposin A-type 1 domain in the interval 19–59 (PVLWQKDCAKGPEVWCQSLRTASQCGAVKHCQQNVWSKPAV). 4 Saposin B-type domains span residues 60–143 (NSIP…QSLQ), 193–277 (TEDV…PSVK), 307–388 (TFSV…AANK), and 399–480 (AGGF…GAAK). 3 disulfide bridges follow: cysteine 64–cysteine 139, cysteine 67–cysteine 133, and cysteine 95–cysteine 107. A glycan (N-linked (GlcNAc...) asparagine) is linked at asparagine 81. The propeptide occupies 144-193 (KHLAAMKLQKQLQSNKIPELDFSELTSPFMANVPLLLYPQDKPKQKSKAT). 3 cysteine pairs are disulfide-bonded: cysteine 197–cysteine 273, cysteine 200–cysteine 267, and cysteine 229–cysteine 240. A glycan (N-linked (GlcNAc...) asparagine) is linked at asparagine 214. Residues 277–306 (KSVPLQTLVPAQVVHEVKMETVEKATVQEK) constitute a propeptide that is removed on maturation. 3 disulfide bridges follow: cysteine 311–cysteine 384, cysteine 314–cysteine 378, and cysteine 342–cysteine 353. Asparagine 328 carries an N-linked (GlcNAc...) asparagine glycan. A propeptide spanning residues 388 to 398 (KPPQQPVVVKP) is cleaved from the precursor. 3 cysteine pairs are disulfide-bonded: cysteine 403–cysteine 476, cysteine 406–cysteine 470, and cysteine 434–cysteine 445. N-linked (GlcNAc...) asparagine glycosylation occurs at asparagine 420. The propeptide occupies 480–518 (KKPLLGEDACVWGPGYWCKNMETAAQCNAVDHCRRHVWN). The 37-residue stretch at 482–518 (PLLGEDACVWGPGYWCKNMETAAQCNAVDHCRRHVWN) folds into the Saposin A-type 2 domain.

Saposin-B is a homodimer. In terms of processing, this precursor is proteolytically processed to 4 small peptides, which are similar to each other and are sphingolipid hydrolase activator proteins.

It is found in the lysosome. The protein localises to the secreted. Its function is as follows. The lysosomal degradation of sphingolipids takes place by the sequential action of specific hydrolases. Some of these enzymes require specific low-molecular mass, non-enzymatic proteins: the sphingolipids activator proteins (coproteins). Saposin-A and saposin-C stimulate the hydrolysis of glucosylceramide by beta-glucosylceramidase (EC 3.2.1.45) and galactosylceramide by beta-galactosylceramidase (EC 3.2.1.46). Saposin-C apparently acts by combining with the enzyme and acidic lipid to form an activated complex, rather than by solubilizing the substrate. Functionally, saposin-B stimulates the hydrolysis of galacto-cerebroside sulfate by arylsulfatase A (EC 3.1.6.8), GM1 gangliosides by beta-galactosidase (EC 3.2.1.23) and globotriaosylceramide by alpha-galactosidase A (EC 3.2.1.22). Saposin-B forms a solubilizing complex with the substrates of the sphingolipid hydrolases. In terms of biological role, saposin-D is a specific sphingomyelin phosphodiesterase activator (EC 3.1.4.12). In Gallus gallus (Chicken), this protein is Prosaposin (PSAP).